The following is a 127-amino-acid chain: Small ribosomal subunit protein eS8 (127 aa).

The segment at 1 to 25 is disordered; that stretch reads MTIFQGKSGKKPTGGNLKQAKKKRR.

The protein belongs to the eukaryotic ribosomal protein eS8 family. As to quaternary structure, part of the 30S ribosomal subunit.

This chain is Small ribosomal subunit protein eS8, found in Thermoplasma volcanium (strain ATCC 51530 / DSM 4299 / JCM 9571 / NBRC 15438 / GSS1).